The chain runs to 161 residues: Phosphohistidine phosphatase SixA (161 aa).

The protein belongs to the SixA phosphatase family.

Exhibits phosphohistidine phosphatase activity towards the HPt domain of the ArcB sensor involved in the multistep His-Asp phosphorelay. This Escherichia coli (strain K12) protein is Phosphohistidine phosphatase SixA (sixA).